A 137-amino-acid polypeptide reads, in one-letter code: Small ribosomal subunit protein uS9c (137 aa).

It belongs to the universal ribosomal protein uS9 family.

The protein localises to the plastid. Its subcellular location is the chloroplast. This Chlorella vulgaris (Green alga) protein is Small ribosomal subunit protein uS9c (rps9).